We begin with the raw amino-acid sequence, 52 residues long: UPF0181 protein CGSHiGG_01050 (52 aa).

It belongs to the UPF0181 family.

In Haemophilus influenzae (strain PittGG), this protein is UPF0181 protein CGSHiGG_01050.